The sequence spans 590 residues: Monoterepene synthase TPS1, chloropastic (590 aa).

Residues 1–42 (MALNTFLHFPPCSLSSFSCAVPKLPLAIFHKTMARQIRCPRA) constitute a chloroplast transit peptide. 5 residues coordinate (2E)-geranyl diphosphate: arginine 304, aspartate 341, aspartate 345, arginine 483, and aspartate 486. The Mg(2+) site is built by aspartate 341 and aspartate 345. Residues 341 to 345 (DDMYD) carry the DDXXD motif motif. Positions 486, 490, and 494 each coordinate Mg(2+).

It belongs to the terpene synthase family. Tpsb subfamily. In terms of assembly, monomer. Mg(2+) is required as a cofactor.

It localises to the plastid. Its subcellular location is the chloroplast. The catalysed reaction is (2E)-geranyl diphosphate = beta-thujene + diphosphate. It carries out the reaction (2E)-geranyl diphosphate = sabinene + diphosphate. It catalyses the reaction (2E)-geranyl diphosphate = beta-pinene + diphosphate. The enzyme catalyses (2E)-geranyl diphosphate = alpha-terpinene + diphosphate. The protein operates within secondary metabolite biosynthesis; terpenoid biosynthesis. Its function is as follows. Monoterpene synthase involved in the biosynthesis of volatile organic compounds. Mediates the conversion of (2E)-geranyl diphosphate (GPP) into beta-thujene, sabinene, beta-pinene and alpha-terpinene. Does not use (2E,6E)-farnesyl diphosphate (FPP) as substrate. The polypeptide is Monoterepene synthase TPS1, chloropastic (Cananga odorata (Ylang-ylang tree)).